The following is a 436-amino-acid chain: sn-glycerol-3-phosphate-binding periplasmic protein UgpB (436 aa).

The N-terminal stretch at 1–26 (MTLKKLSYRLAAASALSFFVTSNAFA) is a signal peptide. Positions 68, 92, 147, 274, 308, 347, and 398 each coordinate sn-glycerol 3-phosphate.

The protein belongs to the bacterial solute-binding protein 1 family. As to quaternary structure, the complex is composed of two ATP-binding proteins (UgpC), two transmembrane proteins (UgpA and UgpE) and a solute-binding protein (UgpB).

The protein resides in the periplasm. Part of the ABC transporter complex UgpBAEC involved in sn-glycerol-3-phosphate (G3P) import. Binds G3P. In Agrobacterium fabrum (strain C58 / ATCC 33970) (Agrobacterium tumefaciens (strain C58)), this protein is sn-glycerol-3-phosphate-binding periplasmic protein UgpB (ugpB).